Reading from the N-terminus, the 473-residue chain is Zinc finger and SCAN domain-containing protein 21 (473 aa).

A Glycyl lysine isopeptide (Lys-Gly) (interchain with G-Cter in SUMO2) cross-link involves residue Lys27. The 83-residue stretch at 45–127 (RQRFRQFGYH…TLLEDLEREL (83 aa)) folds into the SCAN box domain. The interval 127-167 (LDEPGHQVSTPPNEQKPVWEKISSSGTAKESPSSMQPQPLE) is disordered. Over residues 148–165 (ISSSGTAKESPSSMQPQP) the composition is skewed to polar residues. Glycyl lysine isopeptide (Lys-Gly) (interchain with G-Cter in SUMO2) cross-links involve residues Lys221 and Lys232. The interval 244–272 (LENEKGTKPPLQEAGSKKGRESVPTKPTP) is disordered. Basic and acidic residues predominate over residues 258–272 (GSKKGRESVPTKPTP). 7 C2H2-type zinc fingers span residues 277 to 299 (YICA…RRTH), 305 to 327 (YVCT…YRTH), 333 to 354 (YDCK…QRMH), 360 to 382 (YQCK…YRIH), 388 to 410 (YQCN…QRLH), 416 to 438 (YKCK…HRIH), and 444 to 466 (YWCH…QRVH). Lys349 is covalently cross-linked (Glycyl lysine isopeptide (Lys-Gly) (interchain with G-Cter in SUMO2)).

This sequence belongs to the krueppel C2H2-type zinc-finger protein family.

It is found in the nucleus. Functionally, strong transcriptional activator. Plays an important role in spermatogenesis; essential for the progression of meiotic prophase I in spermatocytes. The protein is Zinc finger and SCAN domain-containing protein 21 (ZSCAN21) of Pan troglodytes (Chimpanzee).